The sequence spans 155 residues: UPF0225 protein ECA2332 (155 aa).

It belongs to the UPF0225 family.

The sequence is that of UPF0225 protein ECA2332 from Pectobacterium atrosepticum (strain SCRI 1043 / ATCC BAA-672) (Erwinia carotovora subsp. atroseptica).